A 391-amino-acid polypeptide reads, in one-letter code: PPE family protein PPE15 (391 aa).

Positions 312 to 367 (LGEATLVGRLSVPAAWSTAAPATTAGATALEGSGWTVAAEEAGPVTGMMPGMASAA) are eukaryotic-like SH3 domain.

Belongs to the mycobacterial PPE family. As to quaternary structure, forms a heterodimer with PE8. The dimer forms a 1:1:1 heterotrimeric complex with EspG5. PPE15 interacts directly with EspG5. Interacts via the C-terminal region with host Toll-like receptor 4 (TLR4). Interacts, also via the C-terminal region, with two cytosolic subunits of the host NOX complex, p47phox (NCF1) and p67phox (NCF2).

It localises to the secreted. It is found in the host mitochondrion. Functionally, may play a critical role in the homeostasis of triacylglycerol-containing lipid droplets in M.tuberculosis and influence the entry of the pathogen into a dormant state. Is recognized by host TLR4 receptor at the macrophage cell surface, which modulates the host immune response, induces mitochondrial stress and perturbations, and induces macrophage apoptosis leading to pathogen persistence. Also downregulates NOX-mediated reactive oxygen species (ROS) generation in THP1 macrophages, which increases intracellular survival of bacteria. PPE15 interacts with two subunits of the host NADPH oxidase (NOX) complex in the cytosol of macrophages and prevents their migration to the membrane, which inhibits the assembly of the NOX complex at the plasma membrane of THP1 macrophages. This leads to reduced NOX activity and diminished ROS generation. In Mycobacterium tuberculosis (strain CDC 1551 / Oshkosh), this protein is PPE family protein PPE15 (PPE15).